A 436-amino-acid chain; its full sequence is Trigger factor (436 aa).

Positions 161-255 (DDVAIIDFKT…VKEVREKQLP (95 aa)) constitute a PPIase FKBP-type domain.

The protein belongs to the FKBP-type PPIase family. Tig subfamily.

Its subcellular location is the cytoplasm. The enzyme catalyses [protein]-peptidylproline (omega=180) = [protein]-peptidylproline (omega=0). Functionally, involved in protein export. Acts as a chaperone by maintaining the newly synthesized protein in an open conformation. Functions as a peptidyl-prolyl cis-trans isomerase. This chain is Trigger factor, found in Akkermansia muciniphila (strain ATCC BAA-835 / DSM 22959 / JCM 33894 / BCRC 81048 / CCUG 64013 / CIP 107961 / Muc).